A 366-amino-acid polypeptide reads, in one-letter code: Ribosomal RNA large subunit methyltransferase M (366 aa).

S-adenosyl-L-methionine-binding positions include Ser188, 221 to 224 (CPGG), Asp240, Asp260, and Asp277. The active-site Proton acceptor is the Lys306.

The protein belongs to the class I-like SAM-binding methyltransferase superfamily. RNA methyltransferase RlmE family. RlmM subfamily. Monomer.

The protein localises to the cytoplasm. The catalysed reaction is cytidine(2498) in 23S rRNA + S-adenosyl-L-methionine = 2'-O-methylcytidine(2498) in 23S rRNA + S-adenosyl-L-homocysteine + H(+). Functionally, catalyzes the 2'-O-methylation at nucleotide C2498 in 23S rRNA. This Shigella flexneri serotype 5b (strain 8401) protein is Ribosomal RNA large subunit methyltransferase M.